A 387-amino-acid polypeptide reads, in one-letter code: Alkanesulfonate monooxygenase (387 aa).

It belongs to the SsuD family.

It catalyses the reaction an alkanesulfonate + FMNH2 + O2 = an aldehyde + FMN + sulfite + H2O + 2 H(+). Catalyzes the desulfonation of aliphatic sulfonates. In Ralstonia nicotianae (strain ATCC BAA-1114 / GMI1000) (Ralstonia solanacearum), this protein is Alkanesulfonate monooxygenase.